The primary structure comprises 782 residues: Protein phosphatase 1 regulatory subunit 12C (782 aa).

The segment covering 1 to 17 (MSGEDGPAAGPGAAAAA) has biased composition (low complexity). A disordered region spans residues 1 to 43 (MSGEDGPAAGPGAAAAAARERRREQLRQWGARAGAEPGPGERR). Ser2 carries the post-translational modification N-acetylserine. ANK repeat units follow at residues 100 to 129 (DGIS…TVNQ), 133 to 162 (EGWT…NIAA), 226 to 255 (TGAS…DPEL), and 259 to 288 (DGWT…GMDS). Residues 297–329 (CDLADEEVLSLLEELARKQEDLRNQKEASQSRG) are a coiled coil. The tract at residues 316–686 (EDLRNQKEAS…EEPDGGFRTL (371 aa)) is disordered. Residues 323-337 (EASQSRGQEPQAPSS) are compositionally biased toward polar residues. Over residues 349-365 (SSREKISLQDLSKERRP) the composition is skewed to basic and acidic residues. The segment covering 374-383 (QDEDEGEEGP) has biased composition (acidic residues). Phosphoserine occurs at positions 399, 407, 427, 452, and 509. The segment covering 449 to 463 (RSASSSWLEGTSTQA) has biased composition (polar residues). Residues 537-546 (VRDEESESQR) show a composition bias toward basic and acidic residues. Basic residues predominate over residues 547 to 557 (KARSRLMRQSR). Phosphothreonine; by CDC42BP and ROCK2 is present on Thr560. A compositionally biased stretch (basic and acidic residues) spans 567 to 583 (DLKEAEKAAGKAPESEK). 2 positions are modified to phosphoserine: Ser604 and Ser647. A compositionally biased stretch (acidic residues) spans 670-680 (PEPEPESEEPD). A coiled-coil region spans residues 681 to 782 (GGFRTLYAEL…LIRVISKLSK (102 aa)).

In terms of assembly, PP1 comprises a catalytic subunit, PPP1CA, PPP1CB or PPP1CC, and one or several targeting or regulatory subunits. PPP1R12C mediates binding to myosin. Interacts via its N-terminus with PPP1CB. Interacts with IL16. Interacts with the coiled-coil domain of MPRIP. Interacts with NOD2. Post-translationally, phosphorylation at Thr-560 is essential for its interaction with PPP1CB. Ubiquitously expressed. Highly expressed in heart.

Its subcellular location is the cytoplasm. It is found in the cytoskeleton. It localises to the stress fiber. In terms of biological role, regulates myosin phosphatase activity. The sequence is that of Protein phosphatase 1 regulatory subunit 12C from Homo sapiens (Human).